Reading from the N-terminus, the 256-residue chain is Thiazole synthase (256 aa).

Residue lysine 95 is the Schiff-base intermediate with DXP of the active site. 1-deoxy-D-xylulose 5-phosphate is bound by residues glycine 156, 182-183, and 204-205; these read AG and NT.

It belongs to the ThiG family. In terms of assembly, homotetramer. Forms heterodimers with either ThiH or ThiS.

The protein resides in the cytoplasm. The catalysed reaction is [ThiS sulfur-carrier protein]-C-terminal-Gly-aminoethanethioate + 2-iminoacetate + 1-deoxy-D-xylulose 5-phosphate = [ThiS sulfur-carrier protein]-C-terminal Gly-Gly + 2-[(2R,5Z)-2-carboxy-4-methylthiazol-5(2H)-ylidene]ethyl phosphate + 2 H2O + H(+). It participates in cofactor biosynthesis; thiamine diphosphate biosynthesis. Catalyzes the rearrangement of 1-deoxy-D-xylulose 5-phosphate (DXP) to produce the thiazole phosphate moiety of thiamine. Sulfur is provided by the thiocarboxylate moiety of the carrier protein ThiS. In vitro, sulfur can be provided by H(2)S. This Klebsiella pneumoniae (strain 342) protein is Thiazole synthase.